Consider the following 130-residue polypeptide: Serum amyloid A-4 protein (130 aa).

The signal sequence occupies residues 1–18; sequence MRLFTGIVFCSLVMGVTS. Asparagine 94 carries an N-linked (GlcNAc...) asparagine; partial glycan. Positions 101-130 are disordered; that stretch reads DSKSNEKAEEWGRSGKDPDRFRPDGLPKKY.

Belongs to the SAA family. In terms of assembly, apolipoprotein of the HDL complex. Expressed by the liver; secreted in plasma.

It is found in the secreted. Major acute phase reactant. This Homo sapiens (Human) protein is Serum amyloid A-4 protein.